A 376-amino-acid chain; its full sequence is Drebrin-like protein B (376 aa).

In terms of domain architecture, ADF-H spans 2 to 133 (SVNLSKNGAA…EPESIMEKVA (132 aa)). Positions 175–231 (KENFWAKAEKDEEERRIEEHRRANVEKDRLERERKEREQREAEERERRFRERSKEID) form a coiled coil. A compositionally biased stretch (basic and acidic residues) spans 202–242 (DRLERERKEREQREAEERERRFRERSKEIDGHRKQQEEVEK). The disordered stretch occupies residues 202 to 288 (DRLERERKER…FTASQQEEEN (87 aa)). Positions 268–283 (ESGSVSAQPEQFTASQ) are enriched in polar residues. One can recognise an SH3 domain in the interval 317–376 (DSGMCARALYDYQAADDTEISFDPDDVIIQIEMIDDGWWRGVAPSGHFGMFPANYVELLE).

Belongs to the ABP1 family.

The protein resides in the cytoplasm. Its subcellular location is the cytoskeleton. It localises to the cell projection. The protein localises to the lamellipodium. It is found in the ruffle. The protein resides in the cell cortex. Its subcellular location is the cytosol. It localises to the synapse. The protein localises to the perikaryon. It is found in the neuron projection. The protein resides in the cell membrane. Its subcellular location is the cytoplasmic vesicle. It localises to the clathrin-coated vesicle membrane. The protein localises to the golgi apparatus membrane. It is found in the podosome. The protein resides in the early endosome. Its subcellular location is the dendrite. It localises to the postsynaptic density. In terms of biological role, adapter protein that binds F-actin and dynamin, and thereby plays a role in receptor-mediated endocytosis. Plays a role in the reorganization of the actin cytoskeleton, formation of cell projections, such as neurites, in neuron morphogenesis and synapse formation. Does not bind G-actin and promote actin polymerization by itself, but excerts its functions by interaction with other proteins. Required for the formation of organized podosome rosettes. The polypeptide is Drebrin-like protein B (dbnl-b) (Xenopus laevis (African clawed frog)).